The sequence spans 87 residues: Small ribosomal subunit protein bS20 (87 aa).

The tract at residues 1 to 27 (MANIKSAKKRAIQSEKRRQHNASRRSM) is disordered.

It belongs to the bacterial ribosomal protein bS20 family.

Binds directly to 16S ribosomal RNA. This chain is Small ribosomal subunit protein bS20, found in Aeromonas salmonicida (strain A449).